Consider the following 310-residue polypeptide: ADP-L-glycero-D-manno-heptose-6-epimerase (310 aa).

NADP(+) contacts are provided by residues 10–11 (FI), 31–32 (DN), Lys38, Lys53, 75–79 (EGACS), and Asn92. The Proton acceptor role is filled by Tyr140. Lys144 contacts NADP(+). Asn169 lines the substrate pocket. 2 residues coordinate NADP(+): Val170 and Lys178. Catalysis depends on Lys178, which acts as the Proton acceptor. Substrate-binding positions include Ser180, His187, 201–204 (FSGS), Arg209, and Tyr272.

The protein belongs to the NAD(P)-dependent epimerase/dehydratase family. HldD subfamily. In terms of assembly, homopentamer. NADP(+) is required as a cofactor.

It catalyses the reaction ADP-D-glycero-beta-D-manno-heptose = ADP-L-glycero-beta-D-manno-heptose. It participates in nucleotide-sugar biosynthesis; ADP-L-glycero-beta-D-manno-heptose biosynthesis; ADP-L-glycero-beta-D-manno-heptose from D-glycero-beta-D-manno-heptose 7-phosphate: step 4/4. Its function is as follows. Catalyzes the interconversion between ADP-D-glycero-beta-D-manno-heptose and ADP-L-glycero-beta-D-manno-heptose via an epimerization at carbon 6 of the heptose. This chain is ADP-L-glycero-D-manno-heptose-6-epimerase, found in Pectobacterium carotovorum subsp. carotovorum (strain PC1).